We begin with the raw amino-acid sequence, 786 residues long: LPS-assembly protein LptD (786 aa).

The N-terminal stretch at 1–39 is a signal peptide; it reads MPPKPLFPNVFPGDGAPRKRRLALALLAVPGLVPAVSYA. Residues 767 to 786 form a disordered region; the sequence is PGYTPLPPPPPPMSRFSNYE. Positions 770–779 are enriched in pro residues; that stretch reads TPLPPPPPPM.

Belongs to the LptD family. Component of the lipopolysaccharide transport and assembly complex. Interacts with LptE and LptA.

It localises to the cell outer membrane. In terms of biological role, together with LptE, is involved in the assembly of lipopolysaccharide (LPS) at the surface of the outer membrane. In Burkholderia lata (strain ATCC 17760 / DSM 23089 / LMG 22485 / NCIMB 9086 / R18194 / 383), this protein is LPS-assembly protein LptD.